The primary structure comprises 183 residues: Dual-action ribosomal maturation protein DarP (183 aa).

The disordered stretch occupies residues M1–D21.

It belongs to the DarP family.

It localises to the cytoplasm. Its function is as follows. Member of a network of 50S ribosomal subunit biogenesis factors which assembles along the 30S-50S interface, preventing incorrect 23S rRNA structures from forming. Promotes peptidyl transferase center (PTC) maturation. This chain is Dual-action ribosomal maturation protein DarP, found in Pectobacterium atrosepticum (strain SCRI 1043 / ATCC BAA-672) (Erwinia carotovora subsp. atroseptica).